A 282-amino-acid chain; its full sequence is NAD kinase (282 aa).

The Proton acceptor role is filled by aspartate 67. NAD(+) is bound by residues aspartate 67–glycine 68, asparagine 140–glutamate 141, histidine 151, arginine 170, aspartate 172, and threonine 183–serine 188.

Belongs to the NAD kinase family. Requires a divalent metal cation as cofactor.

The protein resides in the cytoplasm. The catalysed reaction is NAD(+) + ATP = ADP + NADP(+) + H(+). Functionally, involved in the regulation of the intracellular balance of NAD and NADP, and is a key enzyme in the biosynthesis of NADP. Catalyzes specifically the phosphorylation on 2'-hydroxyl of the adenosine moiety of NAD to yield NADP. The sequence is that of NAD kinase from Halobacterium salinarum (strain ATCC 700922 / JCM 11081 / NRC-1) (Halobacterium halobium).